The chain runs to 230 residues: Uracil-DNA glycosylase (230 aa).

Residue aspartate 71 is the Proton acceptor of the active site.

This sequence belongs to the uracil-DNA glycosylase (UDG) superfamily. UNG family.

The protein localises to the cytoplasm. The catalysed reaction is Hydrolyzes single-stranded DNA or mismatched double-stranded DNA and polynucleotides, releasing free uracil.. In terms of biological role, excises uracil residues from the DNA which can arise as a result of misincorporation of dUMP residues by DNA polymerase or due to deamination of cytosine. This chain is Uracil-DNA glycosylase, found in Tropheryma whipplei (strain TW08/27) (Whipple's bacillus).